Reading from the N-terminus, the 261-residue chain is Cytochrome c oxidase subunit 3 (261 aa).

Topologically, residues 1–15 (MTHQTHAYHMVNPSP) are mitochondrial matrix. Residues 16–34 (WPLTGALSALLMTSGLIMW) form a helical membrane-spanning segment. The Mitochondrial intermembrane portion of the chain corresponds to 35–40 (FHFNSV). Residues 41 to 66 (ALLTLGLTTNMLTMYQWWRDVIREST) traverse the membrane as a helical segment. Residues 67 to 72 (FQGHHT) are Mitochondrial matrix-facing. The helical transmembrane segment at 73 to 105 (PNVQKGLRYGMILFIISEVLFFTGFFWAFYHSS) threads the bilayer. Topologically, residues 106-128 (LAPTPELGGCWPPTGIHPLNPLE) are mitochondrial intermembrane. Residues 129 to 152 (VPLLNTSVLLASGVSITWAHHSLM) form a helical membrane-spanning segment. The Mitochondrial matrix segment spans residues 153 to 155 (EGN). A helical membrane pass occupies residues 156–183 (RNHMLQALFITIALGVYFTLLQASEYYE). Over 184–190 (APFTISD) the chain is Mitochondrial intermembrane. A helical transmembrane segment spans residues 191–223 (GVYGSTFFVATGFHGLHVIIGSTFLIVCFFRQL). The Mitochondrial matrix segment spans residues 224–232 (KFHFTSSHH). The helical transmembrane segment at 233 to 256 (FGFEAAAWYWHFVDVVWLFLYVSI) threads the bilayer. At 257 to 261 (YWWGS) the chain is on the mitochondrial intermembrane side.

Belongs to the cytochrome c oxidase subunit 3 family. As to quaternary structure, component of the cytochrome c oxidase (complex IV, CIV), a multisubunit enzyme composed of 14 subunits. The complex is composed of a catalytic core of 3 subunits MT-CO1, MT-CO2 and MT-CO3, encoded in the mitochondrial DNA, and 11 supernumerary subunits COX4I, COX5A, COX5B, COX6A, COX6B, COX6C, COX7A, COX7B, COX7C, COX8 and NDUFA4, which are encoded in the nuclear genome. The complex exists as a monomer or a dimer and forms supercomplexes (SCs) in the inner mitochondrial membrane with NADH-ubiquinone oxidoreductase (complex I, CI) and ubiquinol-cytochrome c oxidoreductase (cytochrome b-c1 complex, complex III, CIII), resulting in different assemblies (supercomplex SCI(1)III(2)IV(1) and megacomplex MCI(2)III(2)IV(2)).

The protein localises to the mitochondrion inner membrane. The catalysed reaction is 4 Fe(II)-[cytochrome c] + O2 + 8 H(+)(in) = 4 Fe(III)-[cytochrome c] + 2 H2O + 4 H(+)(out). Component of the cytochrome c oxidase, the last enzyme in the mitochondrial electron transport chain which drives oxidative phosphorylation. The respiratory chain contains 3 multisubunit complexes succinate dehydrogenase (complex II, CII), ubiquinol-cytochrome c oxidoreductase (cytochrome b-c1 complex, complex III, CIII) and cytochrome c oxidase (complex IV, CIV), that cooperate to transfer electrons derived from NADH and succinate to molecular oxygen, creating an electrochemical gradient over the inner membrane that drives transmembrane transport and the ATP synthase. Cytochrome c oxidase is the component of the respiratory chain that catalyzes the reduction of oxygen to water. Electrons originating from reduced cytochrome c in the intermembrane space (IMS) are transferred via the dinuclear copper A center (CU(A)) of subunit 2 and heme A of subunit 1 to the active site in subunit 1, a binuclear center (BNC) formed by heme A3 and copper B (CU(B)). The BNC reduces molecular oxygen to 2 water molecules using 4 electrons from cytochrome c in the IMS and 4 protons from the mitochondrial matrix. This chain is Cytochrome c oxidase subunit 3 (MT-CO3), found in Nanger dama (Dama gazelle).